The sequence spans 963 residues: MLSGERKEGGSPRFGKLHLPVGLWINSPRKQLAKLGRRWPSAASVKSSSSDTGSRSSEPLPPPPPHVELRRVGAVKAAGGASGSRAKRISQLFRGSGTGTTGSSGAGGPGTPGGAQRWASEKKLPELAAGVAPEPPLATRATAPPGVLKIFGAGLASGANYKSVLATARSTARELVAEALERYGLAGSPGGGPGESSCVDAFALCDALGRPAAAGVGSGEWRAEHLRVLGDSERPLLVQELWRARPGWARRFELRGREEARRLEQEAFGAADSEGTGAPSWRPQKNRSRAASGGAALASPGPGTGSGAPAGSGGKERSENLSLRRSVSELSLQGRRRRQQERRQQALSMAPGAADAQIGTADPGDFDQLTQCLIQAPSNRPYFLLLQGYQDAQDFVVYVMTREQHVFGRGGNSSGRGGSPAPYVDTFLNAPDILPRHCTVRAGPEHPAMVRPSRGAPVTHNGCLLLREAELHPGDLLGLGEHFLFMYKDPRTGGSGPARPPWLPARPGATPPGPGWAFSCRLCGRGLQERGEALAAYLDGREPVLRFRPREEEALLGEIVRAAAAGSGDLPPLGPATLLALCVQHSARELELGHLPRLLGRLARLIKEAVWEKIKEIGDRQPENHPEGVPEVPLTPEAVSVELRPLMLWMANTTELLSFVQEKVLEMEKEADQEDPQLCNDLELCDEAMALLDEVIMCTFQQSVYYLTKTLYSTLPALLDSNPFTAGAELPGPGAELGAMPPGLRPTLGVFQAALELTSQCELHPDLVSQTFGYLFFFSNASLLNSLMERGQGRPFYQWSRAVQIRTNLDLVLDWLQGAGLGDIATEFFRKLSMAVNLLCVPRTSLLKASWSSLRTDHPTLTPAQLHHLLSHYQLGPGRGPPAAWDPPPAEREAVDTGDIFESFSSHPPLILPLGSSRLRLTGPVTDDALHRELRRLRRLLWDLEQQELPANYRHGPPVATSP.

Residues 1–10 (MLSGERKEGG) show a composition bias toward basic and acidic residues. Disordered stretches follow at residues 1 to 22 (MLSG…LPVG) and 35 to 118 (LGRR…AQRW). Over residues 41-57 (SAASVKSSSSDTGSRSS) the composition is skewed to low complexity. Position 94 is an omega-N-methylarginine (R94). Residues 96–113 (SGTGTTGSSGAGGPGTPG) are compositionally biased toward gly residues. Positions 144-259 (PPGVLKIFGA…RRFELRGREE (116 aa)) constitute a Ras-associating domain. Phosphoserine occurs at positions 188, 280, and 292. A disordered region spans residues 267–356 (AFGAADSEGT…LSMAPGAADA (90 aa)). Residues 290 to 301 (AASGGAALASPG) are compositionally biased toward low complexity. Over residues 302–313 (PGTGSGAPAGSG) the composition is skewed to gly residues. The segment covering 320-333 (NLSLRRSVSELSLQ) has biased composition (low complexity). Phosphoserine occurs at positions 326, 328, 331, and 419. A Dilute domain is found at 600-897 (GRLARLIKEA…PPAEREAVDT (298 aa)).

As to quaternary structure, interacts with Ras family members that have been activated by GTP binding. Interacts with HRAS, RAP1A, RAP2, RRAS, RAF1 and RRAS2. Interacts with MYH9 and ARHGAP29. Highly expressed in heart. Detected at lower levels in placenta and pancreas.

It is found in the cytoplasm. The protein resides in the perinuclear region. The protein localises to the golgi apparatus. Its subcellular location is the golgi stack. Its function is as follows. Required for the proper formation of vascular structures that develop via both vasculogenesis and angiogenesis. Acts as a critical and vascular-specific regulator of GTPase signaling, cell architecture, and adhesion, which is essential for endothelial cell morphogenesis and blood vessel tubulogenesis. Regulates the activity of Rho GTPases in part by recruiting ARHGAP29 and suppressing RhoA signaling and dampening ROCK and MYH9 activities in endothelial cells. May act as effector for Golgi-bound HRAS and other Ras-like proteins. May promote HRAS-mediated transformation. Negative regulator of amino acid starvation-induced autophagy. This Homo sapiens (Human) protein is Ras-interacting protein 1 (RASIP1).